The sequence spans 188 residues: Scytalone dehydratase (188 aa).

The substrate site is built by Tyr27, Tyr47, and Phe50. Residues His82 and His107 contribute to the active site. Position 128 (Asn128) interacts with substrate.

This sequence belongs to the scytalone dehydratase family. In terms of assembly, homotrimer. Each subunit contains an active site, located in the central part of the hydrophobic core of the monomer, which functions independently.

Its subcellular location is the endosome. It carries out the reaction scytalone = 1,3,8-trihydroxynaphthalene + H2O. It participates in pigment biosynthesis; melanin biosynthesis. Carpropamid acts as an efficient inhibitor of scytalone dehydratase activity. Functionally, scytalone dehydratase; part of the gene cluster that mediates the biosynthesis of dihydroxynaphthalene (DHN)-melanin, a bluish-green pigment and a structural component of the conidial wall. Within the pathway, catalyzes the dehydration of scytalone as well as of vermelone. This is Scytalone dehydratase from Colletotrichum orbiculare (strain 104-T / ATCC 96160 / CBS 514.97 / LARS 414 / MAFF 240422) (Cucumber anthracnose fungus).